Reading from the N-terminus, the 303-residue chain is Mycothiol acetyltransferase (303 aa).

N-acetyltransferase domains are found at residues 1–150 (MALL…RPLD) and 162–303 (VTIR…QFGR). E18 lines the 1D-myo-inositol 2-(L-cysteinylamino)-2-deoxy-alpha-D-glucopyranoside pocket. 77–79 (LAV) lines the acetyl-CoA pocket. Residues E189, K229, and E237 each contribute to the 1D-myo-inositol 2-(L-cysteinylamino)-2-deoxy-alpha-D-glucopyranoside site. Acetyl-CoA is bound by residues 241–243 (VGV) and 248–254 (QGNGLGR). Residue Y275 coordinates 1D-myo-inositol 2-(L-cysteinylamino)-2-deoxy-alpha-D-glucopyranoside. 280–285 (NTAAIK) is an acetyl-CoA binding site.

This sequence belongs to the acetyltransferase family. MshD subfamily. Monomer.

The catalysed reaction is 1D-myo-inositol 2-(L-cysteinylamino)-2-deoxy-alpha-D-glucopyranoside + acetyl-CoA = mycothiol + CoA + H(+). Functionally, catalyzes the transfer of acetyl from acetyl-CoA to desacetylmycothiol (Cys-GlcN-Ins) to form mycothiol. The chain is Mycothiol acetyltransferase from Saccharopolyspora erythraea (strain ATCC 11635 / DSM 40517 / JCM 4748 / NBRC 13426 / NCIMB 8594 / NRRL 2338).